Consider the following 339-residue polypeptide: Phenylalanine--tRNA ligase alpha subunit (339 aa).

E254 contacts Mg(2+).

The protein belongs to the class-II aminoacyl-tRNA synthetase family. Phe-tRNA synthetase alpha subunit type 1 subfamily. In terms of assembly, tetramer of two alpha and two beta subunits. It depends on Mg(2+) as a cofactor.

The protein localises to the cytoplasm. It carries out the reaction tRNA(Phe) + L-phenylalanine + ATP = L-phenylalanyl-tRNA(Phe) + AMP + diphosphate + H(+). The protein is Phenylalanine--tRNA ligase alpha subunit of Clostridium botulinum (strain Alaska E43 / Type E3).